Here is a 68-residue protein sequence, read N- to C-terminus: Large ribosomal subunit protein uL30 (68 aa).

Belongs to the universal ribosomal protein uL30 family. In terms of assembly, part of the 50S ribosomal subunit.

This Bartonella henselae (strain ATCC 49882 / DSM 28221 / CCUG 30454 / Houston 1) (Rochalimaea henselae) protein is Large ribosomal subunit protein uL30.